The primary structure comprises 406 residues: Tyrosine--tRNA ligase (406 aa).

Tyrosine 34 contacts L-tyrosine. Positions 39-48 (PTADSLHVGH) match the 'HIGH' region motif. L-tyrosine is bound by residues tyrosine 167 and glutamine 171. A 'KMSKS' region motif is present at residues 227 to 231 (KMGKT). Residue lysine 230 participates in ATP binding. The region spanning 339–404 (RKIVDVLFEA…GKKEYHRLLV (66 aa)) is the S4 RNA-binding domain.

Belongs to the class-I aminoacyl-tRNA synthetase family. TyrS type 1 subfamily. As to quaternary structure, homodimer.

The protein localises to the cytoplasm. It catalyses the reaction tRNA(Tyr) + L-tyrosine + ATP = L-tyrosyl-tRNA(Tyr) + AMP + diphosphate + H(+). Its function is as follows. Catalyzes the attachment of tyrosine to tRNA(Tyr) in a two-step reaction: tyrosine is first activated by ATP to form Tyr-AMP and then transferred to the acceptor end of tRNA(Tyr). The chain is Tyrosine--tRNA ligase from Caldanaerobacter subterraneus subsp. tengcongensis (strain DSM 15242 / JCM 11007 / NBRC 100824 / MB4) (Thermoanaerobacter tengcongensis).